The chain runs to 57 residues: Large ribosomal subunit protein bL32 (57 aa).

The protein belongs to the bacterial ribosomal protein bL32 family.

The sequence is that of Large ribosomal subunit protein bL32 from Corynebacterium glutamicum (strain R).